The primary structure comprises 231 residues: Large ribosomal subunit protein uL1 (231 aa).

The protein belongs to the universal ribosomal protein uL1 family. As to quaternary structure, part of the 50S ribosomal subunit.

In terms of biological role, binds directly to 23S rRNA. The L1 stalk is quite mobile in the ribosome, and is involved in E site tRNA release. Protein L1 is also a translational repressor protein, it controls the translation of the L11 operon by binding to its mRNA. The polypeptide is Large ribosomal subunit protein uL1 (Staphylococcus haemolyticus (strain JCSC1435)).